We begin with the raw amino-acid sequence, 401 residues long: Splicing factor 45 (401 aa).

Serine 2 carries the post-translational modification N-acetylserine. Serine 2 bears the Phosphoserine mark. Residue lysine 15 forms a Glycyl lysine isopeptide (Lys-Gly) (interchain with G-Cter in SUMO2) linkage. N6-acetyllysine is present on lysine 21. Residues lysine 24 and lysine 33 each participate in a glycyl lysine isopeptide (Lys-Gly) (interchain with G-Cter in SUMO2) cross-link. Position 41 is an N6-acetyllysine; alternate (lysine 41). Residue lysine 41 forms a Glycyl lysine isopeptide (Lys-Gly) (interchain with G-Cter in SUMO2); alternate linkage. The segment covering 57-68 (LKRGGSSDDRQI) has biased composition (basic and acidic residues). 2 disordered regions span residues 57–84 (LKRG…DPVP) and 114–233 (RQRE…FLAN). Lysine 58 is covalently cross-linked (Glycyl lysine isopeptide (Lys-Gly) (interchain with G-Cter in SUMO2)). Threonine 71 bears the Phosphothreonine mark. The segment covering 114-153 (RQREERQRQRELERQKEIEEREKRRKDRHEASGFARRPDP) has biased composition (basic and acidic residues). Phosphoserine occurs at positions 155 and 169. Basic and acidic residues predominate over residues 182–200 (VEKDKELPRDFPYEEDSRP). Position 222 is a phosphoserine (serine 222). Residues 235–283 (GGTVAHKIMQKYGFREGQGLGKHEQGLSTALSVEKTSKRGGKIIVGDAT) form the G-patch domain. Threonine 237 carries the phosphothreonine modification. A Glycyl lysine isopeptide (Lys-Gly) (interchain with G-Cter in SUMO2) cross-link involves residue lysine 256. Serine 266 bears the Phosphoserine mark. Lysine 276 is covalently cross-linked (Glycyl lysine isopeptide (Lys-Gly) (interchain with G-Cter in SUMO2)). 2 positions are modified to phosphoserine: serine 291 and serine 293. One can recognise an RRM domain in the interval 306–385 (VVLLRNMVGA…YFGGRVVKAC (80 aa)).

As to quaternary structure, binds SXL. Associates with the spliceosome. Interacts with SF3B1, SF1 and U2AF2.

It localises to the nucleus. Functionally, splice factor that binds to the single-stranded 3'AG at the exon/intron border and promotes its utilization in the second catalytic step. Involved in the regulation of alternative splicing and the utilization of cryptic splice sites. Promotes the utilization of a cryptic splice site created by the beta-110 mutation in the HBB gene. The resulting frameshift leads to sickle cell anemia. This chain is Splicing factor 45 (RBM17), found in Homo sapiens (Human).